Consider the following 92-residue polypeptide: Cell division protein FtsB (92 aa).

At M1–L3 the chain is on the cytoplasmic side. The chain crosses the membrane as a helical span at residues F4 to F21. The Periplasmic segment spans residues G22–D92. Residues D28–E62 are a coiled coil.

The protein belongs to the FtsB family. As to quaternary structure, part of a complex composed of FtsB, FtsL and FtsQ.

The protein localises to the cell inner membrane. Its function is as follows. Essential cell division protein. May link together the upstream cell division proteins, which are predominantly cytoplasmic, with the downstream cell division proteins, which are predominantly periplasmic. This is Cell division protein FtsB from Psychromonas ingrahamii (strain DSM 17664 / CCUG 51855 / 37).